The sequence spans 148 residues: Large ribosomal subunit protein uL15 (148 aa).

Residues 1-10 (MQLHNLEYKK) are compositionally biased toward basic and acidic residues. The disordered stretch occupies residues 1 to 42 (MQLHNLEYKKGSRNHKEKRVGRGHGSGLGKTSGRGQDGQKAR). Residues 11-22 (GSRNHKEKRVGR) are compositionally biased toward basic residues. Gly residues predominate over residues 23–36 (GHGSGLGKTSGRGQ).

Belongs to the universal ribosomal protein uL15 family. Part of the 50S ribosomal subunit.

Binds to the 23S rRNA. This chain is Large ribosomal subunit protein uL15, found in Ureaplasma urealyticum serovar 10 (strain ATCC 33699 / Western).